Reading from the N-terminus, the 90-residue chain is Elongation factor 1-beta (90 aa).

This sequence belongs to the EF-1-beta/EF-1-delta family.

In terms of biological role, promotes the exchange of GDP for GTP in EF-1-alpha/GDP, thus allowing the regeneration of EF-1-alpha/GTP that could then be used to form the ternary complex EF-1-alpha/GTP/AAtRNA. The sequence is that of Elongation factor 1-beta from Staphylothermus marinus (strain ATCC 43588 / DSM 3639 / JCM 9404 / F1).